The following is a 265-amino-acid chain: Cytochrome c oxidase subunit 3 (265 aa).

The next 7 membrane-spanning stretches (helical) occupy residues 16 to 36 (PWPISGSLGALATTVGGVMYM), 41 to 61 (GGATLLSLGLIFILYTMFVWW), 81 to 101 (GPRYGSISFIVSEVMFLFAFF), 137 to 157 (TPILLSSGAAVTWAHHAILAG), 162 to 182 (AVYALVATVSLALVFTGFQGM), 200 to 220 (FFLATGFHGFHVIIGTLFLII), and 245 to 265 (WHFVDVVRLFPFVSIYWWGGI).

The protein belongs to the cytochrome c oxidase subunit 3 family. Component of the cytochrome c oxidase (complex IV, CIV), a multisubunit enzyme composed of a catalytic core of 3 subunits and several supernumerary subunits. The complex exists as a monomer or a dimer and forms supercomplexes (SCs) in the inner mitochondrial membrane with ubiquinol-cytochrome c oxidoreductase (cytochrome b-c1 complex, complex III, CIII).

It is found in the mitochondrion inner membrane. It carries out the reaction 4 Fe(II)-[cytochrome c] + O2 + 8 H(+)(in) = 4 Fe(III)-[cytochrome c] + 2 H2O + 4 H(+)(out). In terms of biological role, component of the cytochrome c oxidase, the last enzyme in the mitochondrial electron transport chain which drives oxidative phosphorylation. The respiratory chain contains 3 multisubunit complexes succinate dehydrogenase (complex II, CII), ubiquinol-cytochrome c oxidoreductase (cytochrome b-c1 complex, complex III, CIII) and cytochrome c oxidase (complex IV, CIV), that cooperate to transfer electrons derived from NADH and succinate to molecular oxygen, creating an electrochemical gradient over the inner membrane that drives transmembrane transport and the ATP synthase. Cytochrome c oxidase is the component of the respiratory chain that catalyzes the reduction of oxygen to water. Electrons originating from reduced cytochrome c in the intermembrane space (IMS) are transferred via the dinuclear copper A center (CU(A)) of subunit 2 and heme A of subunit 1 to the active site in subunit 1, a binuclear center (BNC) formed by heme A3 and copper B (CU(B)). The BNC reduces molecular oxygen to 2 water molecules using 4 electrons from cytochrome c in the IMS and 4 protons from the mitochondrial matrix. This Vicia faba (Broad bean) protein is Cytochrome c oxidase subunit 3 (COX3).